A 160-amino-acid chain; its full sequence is UPF0758 protein YfjY (160 aa).

Positions 38-160 (AFTSTQAARD…IYSFAEHGLL (123 aa)) constitute an MPN domain. Zn(2+) is bound by residues histidine 109, histidine 111, and aspartate 122. A JAMM motif motif is present at residues 109–122 (HNHPSGDTTPSQAD).

The protein belongs to the UPF0758 family.

This chain is UPF0758 protein YfjY (yfjY), found in Escherichia coli (strain K12).